Reading from the N-terminus, the 82-residue chain is Small ribosomal subunit protein bS16 (82 aa).

Belongs to the bacterial ribosomal protein bS16 family.

This chain is Small ribosomal subunit protein bS16, found in Sodalis glossinidius (strain morsitans).